The following is a 1341-amino-acid chain: WD repeat-containing protein 19 (1341 aa).

WD repeat units follow at residues 11–51 (SWLG…RSEI), 52–92 (SLPG…TSQL), 95–134 (GMRD…KIPV), 137–175 (KHTK…IRQT), 273–311 (DHKD…DMYA), and 317–356 (DENK…LGDA). TPR repeat units follow at residues 736–769 (AQDL…AKRL), 775–808 (PFIS…DNKE), 840–873 (RVLK…DRAA), 895–928 (PKIH…NSVI), 951–984 (LDGA…NEAF), and 1020–1053 (EKRH…EDNV).

As to quaternary structure, component of the IFT complex A (IFT-A) complex. IFT-A complex is divided into a core subcomplex composed of IFT122:IFT140:WDR19 which is associated with TULP3 and a peripheral subcomplex composed of IFT43:WDR35:TTC21B. Interacts (via C-terminal region) with IFT122 (via C-terminal region). Interacts with BBS1. Interacts with TTC25. In terms of tissue distribution, tissue-specific expression of isoforms. Expressed in the prostate, testis, epididymis, submaxillary and salivary glands. Expressed in ependymal cells lining brain ventricles (at protein level).

It is found in the cell projection. The protein resides in the cilium. The protein localises to the cytoplasm. Its subcellular location is the cytoskeleton. It localises to the cilium basal body. It is found in the photoreceptor outer segment. The protein resides in the flagellum. As component of the IFT complex A (IFT-A), a complex required for retrograde ciliary transport and entry into cilia of G protein-coupled receptors (GPCRs), it is involved in cilia function and/or assembly. Essential for functional IFT-A assembly and ciliary entry of GPCRs. Associates with the BBSome complex to mediate ciliary transport. The protein is WD repeat-containing protein 19 of Mus musculus (Mouse).